The following is a 160-amino-acid chain: Transcription elongation factor GreA (160 aa).

This sequence belongs to the GreA/GreB family.

Necessary for efficient RNA polymerase transcription elongation past template-encoded arresting sites. The arresting sites in DNA have the property of trapping a certain fraction of elongating RNA polymerases that pass through, resulting in locked ternary complexes. Cleavage of the nascent transcript by cleavage factors such as GreA or GreB allows the resumption of elongation from the new 3'terminus. GreA releases sequences of 2 to 3 nucleotides. In Leuconostoc citreum (strain KM20), this protein is Transcription elongation factor GreA.